Consider the following 123-residue polypeptide: cAMP-responsive element-binding protein-like 2 (123 aa).

A disordered region spans residues 1 to 24 (MDDSKVVGGKVKKPGKRGRKPAKI). A compositionally biased stretch (basic residues) spans 10–21 (KVKKPGKRGRKP). One can recognise a bZIP domain in the interval 23–86 (KIDLKAKLER…MAMDQGKIPS (64 aa)). The segment at 29–60 (KLERSRQSARECRARKKLRYQYLEELVSSRER) is basic motif. Residues 62 to 69 (ICALREEL) form a leucine-zipper region. Positions 93 to 123 (TGEEQNKSQQNSSRHPKAGKTDANTNSLVGN) are disordered. Over residues 114–123 (DANTNSLVGN) the composition is skewed to polar residues.

It belongs to the bZIP family. ATF subfamily. Interacts with CREB1; regulates CREB1 phosphorylation, stability and transcriptional activity. Post-translationally, phosphorylated by AMPK.

The protein localises to the nucleus. In terms of biological role, probable regulator of CREB1 transcriptional activity which is involved in adipose cells differentiation. May also play a regulatory role in the cell cycle. The chain is cAMP-responsive element-binding protein-like 2 (Crebl2) from Rattus norvegicus (Rat).